The chain runs to 286 residues: Alpha-ketoglutarate-dependent dioxygenase alkB homolog 3 (286 aa).

Positions 21–45 (QAIAQPATTAKSHLHQKPGQTWKNK) are disordered. Over residues 22-31 (AIAQPATTAK) the composition is skewed to polar residues. Substrate is bound by residues W115 and 141–143 (YTY). The Fe2OG dioxygenase domain maps to 172–278 (TFNSLLCNLY…RVNLTFRTVY (107 aa)). L177 bears the (4R)-5-hydroxyleucine; alternate mark. L177 is subject to (4R)-5-oxoleucine; alternate. 179-181 (NLY) is a binding site for 2-oxoglutarate. Positions 191 and 193 each coordinate Fe cation. D194 is a binding site for substrate. H257 contacts Fe cation. 2-oxoglutarate-binding positions include 269-275 (RVNLTFR) and R275.

Belongs to the alkB family. In terms of assembly, interacts with the ASCC complex composed of ASCC1, ASCC2 and ASCC3. Interacts directly with ASCC3, and is thereby recruited to the ASCC complex. Interacts with OTUD4; the interaction is direct. Interacts with USP7 and USP9X. Requires Fe(2+) as cofactor. Ubiquitinated; undergoes 'Lys-48'-linked polyubiquitination. OTUD4 promotes USP7 and USP9X-dependent deubiquitination of 'Lys-48'-polyubiquitinated ALKBH3 promoting the repair of alkylated DNA lesions. In terms of tissue distribution, ubiquitous. Detected in heart, pancreas, skeletal muscle, thymus, testis, ovary, spleen, prostate, small intestine, peripheral blood leukocytes, urinary bladder and colon.

The protein localises to the nucleus. It localises to the cytoplasm. The enzyme catalyses an N(1)-methyladenosine in mRNA + 2-oxoglutarate + O2 = an adenosine in mRNA + formaldehyde + succinate + CO2. The catalysed reaction is a methylated nucleobase within DNA + 2-oxoglutarate + O2 = a nucleobase within DNA + formaldehyde + succinate + CO2. It carries out the reaction an N(1)-methyl-2'-deoxyadenosine in single-stranded DNA + 2-oxoglutarate + O2 = a 2'-deoxyadenosine in single-stranded DNA + formaldehyde + succinate + CO2 + H(+). It catalyses the reaction an N(3)-methyl-2'-deoxycytidine in single-stranded DNA + 2-oxoglutarate + O2 = a 2'-deoxycytidine in single-stranded DNA + formaldehyde + succinate + CO2 + H(+). The enzyme catalyses a 3,N(4)-etheno-2'-deoxycytidine in single-stranded DNA + 2-oxoglutarate + O2 + H2O = a 2'-deoxycytidine in single-stranded DNA + glyoxal + succinate + CO2. With respect to regulation, activated by ascorbate. In terms of biological role, dioxygenase that mediates demethylation of DNA and RNA containing 1-methyladenosine (m1A). Repairs alkylated DNA containing 1-methyladenosine (m1A) and 3-methylcytosine (m3C) by oxidative demethylation. Has a strong preference for single-stranded DNA. Able to process alkylated m3C within double-stranded regions via its interaction with ASCC3, which promotes DNA unwinding to generate single-stranded substrate needed for ALKBH3. Can repair exocyclic 3,N4-ethenocytosine adducs in single-stranded DNA. Also acts on RNA. Demethylates N(1)-methyladenosine (m1A) RNA, an epigenetic internal modification of messenger RNAs (mRNAs) highly enriched within 5'-untranslated regions (UTRs) and in the vicinity of start codons. Requires molecular oxygen, alpha-ketoglutarate and iron. The polypeptide is Alpha-ketoglutarate-dependent dioxygenase alkB homolog 3 (Homo sapiens (Human)).